The following is a 614-amino-acid chain: Aspartate--tRNA ligase (614 aa).

An L-aspartate-binding site is contributed by Glu174. Residues 198–201 (QLFK) form an aspartate region. Residue Arg220 coordinates L-aspartate. ATP contacts are provided by residues 220–222 (RDE) and Gln229. Residue His448 participates in L-aspartate binding. Glu482 lines the ATP pocket. Arg489 is a binding site for L-aspartate. 534-537 (GLDR) provides a ligand contact to ATP.

The protein belongs to the class-II aminoacyl-tRNA synthetase family. Type 1 subfamily. Homodimer.

The protein resides in the cytoplasm. The enzyme catalyses tRNA(Asp) + L-aspartate + ATP = L-aspartyl-tRNA(Asp) + AMP + diphosphate. Its function is as follows. Catalyzes the attachment of L-aspartate to tRNA(Asp) in a two-step reaction: L-aspartate is first activated by ATP to form Asp-AMP and then transferred to the acceptor end of tRNA(Asp). The polypeptide is Aspartate--tRNA ligase (Lactobacillus acidophilus (strain ATCC 700396 / NCK56 / N2 / NCFM)).